The chain runs to 100 residues: Putative membrane protein insertion efficiency factor (100 aa).

A disordered region spans residues 73–100; that stretch reads DPVPDLPGSAPEENGRPSPDGQHSGSGG.

This sequence belongs to the UPF0161 family.

Its subcellular location is the cell inner membrane. Its function is as follows. Could be involved in insertion of integral membrane proteins into the membrane. This chain is Putative membrane protein insertion efficiency factor, found in Synechococcus sp. (strain JA-3-3Ab) (Cyanobacteria bacterium Yellowstone A-Prime).